Here is a 203-residue protein sequence, read N- to C-terminus: Ribosomal RNA large subunit methyltransferase E (203 aa).

The S-adenosyl-L-methionine site is built by Gly-60, Trp-62, Asp-79, Asp-95, and Asp-119. The active-site Proton acceptor is Lys-159.

The protein belongs to the class I-like SAM-binding methyltransferase superfamily. RNA methyltransferase RlmE family.

The protein localises to the cytoplasm. It catalyses the reaction uridine(2552) in 23S rRNA + S-adenosyl-L-methionine = 2'-O-methyluridine(2552) in 23S rRNA + S-adenosyl-L-homocysteine + H(+). Functionally, specifically methylates the uridine in position 2552 of 23S rRNA at the 2'-O position of the ribose in the fully assembled 50S ribosomal subunit. This is Ribosomal RNA large subunit methyltransferase E from Pelagibacter ubique (strain HTCC1062).